The primary structure comprises 642 residues: Forkhead box protein K2 (642 aa).

Residues 30–91 (VTIGRNSSQG…NGVFVDGVFQ (62 aa)) enclose the FHA domain. A disordered region spans residues 201 to 221 (QSENDKDASGGDSPKDDSKPP). Residues 203 to 219 (ENDKDASGGDSPKDDSK) are compositionally biased toward basic and acidic residues. The segment at residues 219 to 314 (KPPYSYAQLI…EQAFRKRRPR (96 aa)) is a DNA-binding region (fork-head). The interval 261–279 (KGWQNSIRHNLSLNRYFIK) is DNA-binding; major groove. The Mg(2+) site is built by Leu271, Ser272, Asn274, and Phe277. DNA-binding; minor groove regions lie at residues 289-293 (KGSFW) and 309-314 (RKRRPR). 2 disordered regions span residues 323 to 359 (LGPL…REGS) and 589 to 615 (ASAS…KTDE). 2 stretches are compositionally biased toward polar residues: residues 327-353 (SSRS…TPES) and 589-605 (ASAS…QSEQ). Residues 606–615 (PDIKRGKTDE) are compositionally biased toward basic and acidic residues.

As to expression, in neurula embryos, expressed strongly in the future floor plate and weakly in the neural crest progenitor cells. As development progresses, expression becomes stronger in neural crest cells. At stage 24, expressed in the eye, brain, branchial arches and in the presomitic mesoderm in the posterior embryo. At stage 29, additionally expressed in the pronephric tubules. At stage 35, expressed in the migrating lateral muscle precursors of the abdomen. Additionally, the developing proctodeum and head structures including the branchial arches, eyes and otic vesicles continue to show expression. Expression also persists in the nephros.

The protein localises to the nucleus. It is found in the cytoplasm. Functionally, transcriptional regulator involved in different processes such as glucose metabolism, aerobic glycolysis and autophagy. Recognizes and binds the forkhead DNA sequence motif (5'-GTAAACA-3') and can both act as a transcription activator or repressor, depending on the context. Acts as a key regulator of metabolic reprogramming towards aerobic glycolysis, a process in which glucose is converted to lactate in the presence of oxygen. Acts as a negative regulator of autophagy in skeletal muscle: in response to starvation, enters the nucleus, binds the promoters of autophagy genes and represses their expression, preventing proteolysis of skeletal muscle proteins. The polypeptide is Forkhead box protein K2 (Xenopus laevis (African clawed frog)).